A 126-amino-acid chain; its full sequence is MAIRIVGVDLPQNKRGEIALTYIYGIGRSAAKSVLDKAGVDRDIKVKDWTDDQAAKVREVIGAEYKVEGDLRSEVQLNIKRLMDIGCYRGVRHRVGLPLRGQSTKNNARTRKGKKKTVANKKKATK.

The segment at 98 to 126 (PLRGQSTKNNARTRKGKKKTVANKKKATK) is disordered. Residues 108–126 (ARTRKGKKKTVANKKKATK) show a composition bias toward basic residues.

It belongs to the universal ribosomal protein uS13 family. As to quaternary structure, part of the 30S ribosomal subunit. Forms a loose heterodimer with protein S19. Forms two bridges to the 50S subunit in the 70S ribosome.

In terms of biological role, located at the top of the head of the 30S subunit, it contacts several helices of the 16S rRNA. In the 70S ribosome it contacts the 23S rRNA (bridge B1a) and protein L5 of the 50S subunit (bridge B1b), connecting the 2 subunits; these bridges are implicated in subunit movement. Contacts the tRNAs in the A and P-sites. The protein is Small ribosomal subunit protein uS13 of Parabacteroides distasonis (strain ATCC 8503 / DSM 20701 / CIP 104284 / JCM 5825 / NCTC 11152).